The sequence spans 346 residues: Autophagy-related protein 3 (346 aa).

Residues Asp-85 to Ala-161 are flexible region. The active-site Glycyl thioester intermediate is the Cys-238. The segment at Ser-242–Gln-322 is handle region.

This sequence belongs to the ATG3 family. In terms of assembly, monomer. Interacts with apg-6/atg8 through an intermediate thioester bond through the C-terminal Gly of apg-6/atg8. Also interacts with the 40 amino acid C-terminal region of the E1-like apg-5/atg7 enzyme. Also interacts with the atg12-apg-4/atg5 conjugate.

It localises to the cytoplasm. Its function is as follows. E2 conjugating enzyme required for the cytoplasm to vacuole transport (Cvt) and autophagy. Required for selective autophagic degradation of the nucleus (nucleophagy) as well as for mitophagy which contributes to regulate mitochondrial quantity and quality by eliminating the mitochondria to a basal level to fulfill cellular energy requirements and preventing excess ROS production. Responsible for the E2-like covalent binding of phosphatidylethanolamine to the C-terminal Gly of apg-6/atg8. The atg12-apg-4/atg5 conjugate plays a role of an E3 and promotes the transfer of apg-6/atg8 from apg-3/atg3 to phosphatidylethanolamine (PE). This step is required for the membrane association of apg-6/atg8. The formation of the apg-6/atg8-phosphatidylethanolamine conjugate is essential for autophagy and for the cytoplasm to vacuole transport (Cvt). The apg-6/atg8-PE conjugate mediates tethering between adjacent membranes and stimulates membrane hemifusion, leading to expansion of the autophagosomal membrane during autophagy. The chain is Autophagy-related protein 3 (apg-3) from Neurospora crassa (strain ATCC 24698 / 74-OR23-1A / CBS 708.71 / DSM 1257 / FGSC 987).